Here is a 424-residue protein sequence, read N- to C-terminus: Serine--tRNA ligase (424 aa).

Residue 231-233 (TAE) coordinates L-serine. Residue 262–264 (RSE) participates in ATP binding. Glutamate 285 is an L-serine binding site. 349-352 (EISS) serves as a coordination point for ATP. Serine 385 serves as a coordination point for L-serine.

It belongs to the class-II aminoacyl-tRNA synthetase family. Type-1 seryl-tRNA synthetase subfamily. Homodimer. The tRNA molecule binds across the dimer.

The protein resides in the cytoplasm. It catalyses the reaction tRNA(Ser) + L-serine + ATP = L-seryl-tRNA(Ser) + AMP + diphosphate + H(+). It carries out the reaction tRNA(Sec) + L-serine + ATP = L-seryl-tRNA(Sec) + AMP + diphosphate + H(+). The protein operates within aminoacyl-tRNA biosynthesis; selenocysteinyl-tRNA(Sec) biosynthesis; L-seryl-tRNA(Sec) from L-serine and tRNA(Sec): step 1/1. In terms of biological role, catalyzes the attachment of serine to tRNA(Ser). Is also able to aminoacylate tRNA(Sec) with serine, to form the misacylated tRNA L-seryl-tRNA(Sec), which will be further converted into selenocysteinyl-tRNA(Sec). In Bacillus anthracis (strain A0248), this protein is Serine--tRNA ligase.